We begin with the raw amino-acid sequence, 33 residues long: Mu-theraphotoxin-Ssp1a (33 aa).

Disulfide bonds link C2/C17, C9/C22, and C16/C29. L33 is subject to Leucine amide.

The protein belongs to the neurotoxin 10 (Hwtx-1) family. 22 (Htx-4) subfamily. Expressed by the venom gland.

It localises to the secreted. Its function is as follows. Gating modifier toxin that traps voltage-sensing domain II of voltage-gated sodium channels in the resting state without significantly altering the voltage-dependence of activation and inactivation, or delay in recovery from inactivation. Inhibits hNav1.7/SCN9A (IC(50)=134 nM), followed in rank order of potency by Nav1.6/SCN8A (IC(50)=191 nM), Nav1.2/SCN2A (IC(50)=239 nM), Nav1.3/SCN3A (IC(50)=547 nM) and Nav1.1/SCN1A (IC(50)=674 nM). Its binding to Nav1.2, Nav1.3 and Nav1.7 is slowly reversible and incomplete, with ~25% of Nav1.2, ~50% of Nav1.3 and ~40% of Nav1.7 channels recovering from block after a 30 minutes washout, respectively. Binds in the aqueous cleft formed between the S1-S2 and S3-S4 loops of each channel subtype, primarily targeting the S3-S4 loop. In Selenotypus sp. (Feather-legged tarantula), this protein is Mu-theraphotoxin-Ssp1a.